A 65-amino-acid polypeptide reads, in one-letter code: Small ribosomal subunit protein bS21A (65 aa).

It belongs to the bacterial ribosomal protein bS21 family.

This is Small ribosomal subunit protein bS21A from Francisella tularensis subsp. holarctica (strain LVS).